We begin with the raw amino-acid sequence, 225 residues long: UPF0758 protein XAC3915 (225 aa).

The MPN domain maps to 102–224 (ALSDPPSVGR…PVSFAERGWL (123 aa)). Zn(2+) contacts are provided by H173, H175, and D186. The JAMM motif signature appears at 173–186 (HNHPSGNPEPSEAD).

This sequence belongs to the UPF0758 family.

This Xanthomonas axonopodis pv. citri (strain 306) protein is UPF0758 protein XAC3915.